Here is a 332-residue protein sequence, read N- to C-terminus: Olfactory receptor 10G6 (332 aa).

Over 1 to 46 the chain is Extracellular; sequence MLEGVEHLLLLLLLTDVNSKELQSGNQTSVSHFILVGLHHPPQLGA. N-linked (GlcNAc...) asparagine glycosylation occurs at asparagine 26. The helical transmembrane segment at 47 to 67 threads the bilayer; sequence PLFLAFLVIYLLTVSGNGLII. Over 68 to 75 the chain is Cytoplasmic; the sequence is LTVLVDIR. A helical membrane pass occupies residues 76 to 96; the sequence is LHRPMCLFLCHLSFLDMTISC. At 97-120 the chain is on the extracellular side; sequence AIVPKMLAGFLLGSRIISFGGCVI. Cysteines 118 and 210 form a disulfide. The helical transmembrane segment at 121-141 threads the bilayer; that stretch reads QLFSFHFLGCTECFLYTLMAY. Residues 142–160 lie on the Cytoplasmic side of the membrane; sequence DRFLAICKPLHYATIMTHR. Residues 161-181 form a helical membrane-spanning segment; sequence VCNSLALGTWLGGTIHSLFQT. Topologically, residues 182-218 are extracellular; the sequence is SFVFRLPFCGPNRVDYIFCDIPAMLRLACADTAINEL. The chain crosses the membrane as a helical span at residues 219-238; that stretch reads VTFADIGFLALTCFMLILTS. At 239 to 258 the chain is on the cytoplasmic side; it reads YGYIVAAILRIPSADGRRNA. The chain crosses the membrane as a helical span at residues 259–279; that stretch reads FSTCAAHLTVVIVYYVPCTFI. The Extracellular segment spans residues 280–290; the sequence is YLRPCSQEPLD. Residues 291 to 311 form a helical membrane-spanning segment; the sequence is GVVAVFYTVITPLLNSIIYTL. Residues 312–332 are Cytoplasmic-facing; sequence CNKEMKAALQRLGGHKEVQPH.

The protein belongs to the G-protein coupled receptor 1 family.

Its subcellular location is the cell membrane. Odorant receptor. The polypeptide is Olfactory receptor 10G6 (OR10G6) (Homo sapiens (Human)).